Consider the following 246-residue polypeptide: Small ribosomal subunit protein uS2 (246 aa).

This sequence belongs to the universal ribosomal protein uS2 family.

This is Small ribosomal subunit protein uS2 from Exiguobacterium sp. (strain ATCC BAA-1283 / AT1b).